The following is a 647-amino-acid chain: LIM domain kinase 1 (647 aa).

LIM zinc-binding domains follow at residues 25–75 (CASC…CKKD) and 84–137 (CHGC…CGQC). The PDZ domain occupies 165-258 (LVSIPASAHG…LLQLTLEHDP (94 aa)). Ser-210 carries the post-translational modification Phosphoserine. Thr-229 is modified (phosphothreonine). Positions 256-319 (HDPHDSLGHG…SPASQRKDLG (64 aa)) are disordered. The segment covering 266 to 277 (PVSDPSPLSSPV) has biased composition (low complexity). Composition is skewed to polar residues over residues 278 to 289 (HTPSGQAASSAR) and 298 to 313 (SIDT…SPAS). Phosphoserine is present on residues Ser-298, Ser-302, Ser-307, and Ser-310. Ser-323 carries the post-translational modification Phosphoserine; by MAPKAPK2. Residue Ser-337 is modified to Phosphoserine. In terms of domain architecture, Protein kinase spans 339-604 (LIHGEVLGKG…PSFVKLEQWL (266 aa)). Residues 345-353 (LGKGCFGQA) and Lys-368 each bind ATP. Asp-460 is a catalytic residue. Thr-508 is modified (phosphothreonine; by ROCK1).

It belongs to the protein kinase superfamily. TKL Ser/Thr protein kinase family. Self-associates to form homodimers. Interacts with HSP90AA1; this interaction promotes LIMK1 dimerization and subsequent transphosphorylation. Interacts with CDKN1C. Interacts (via LIM domain) with the cytoplasmic domain of NRG1. Interacts with NISCH. Interacts with SSH1. Interacts with RLIM and RNF6. Interacts (via LIM zinc-binding domains) with FAM89B/LRAP25 (via LRR repeat). Forms a tripartite complex with CDC42BPA, CDC42BPB and FAM89B/LRAP25. In terms of processing, autophosphorylated. Phosphorylated on Thr-508 by ROCK1 and PAK1, resulting in activation. Phosphorylated by PAK4 which increases the ability of LIMK1 to phosphorylate cofilin. Phosphorylated at Ser-323 by MAPKAPK2 during activation of VEGFA-induced signaling, which results in activation of LIMK1 and promotion of actin reorganization, cell migration, and tubule formation of endothelial cells. Dephosphorylated and inactivated by SSH1. Phosphorylated by CDC42BP. Post-translationally, ubiquitinated. 'Lys-48'-linked polyubiquitination by RNF6 leads to proteasomal degradation through the 26S proteasome, modulating LIMK1 levels in the growth cone and its effect on axonal outgrowth. Also polyubiquitinated by RLIM. As to expression, highest expression in the nervous system, particularly in the spinal cord and the cranial nerve and dorsal root ganglia.

It is found in the cytoplasm. The protein localises to the nucleus. It localises to the cytoskeleton. The protein resides in the cell projection. Its subcellular location is the lamellipodium. The enzyme catalyses L-seryl-[protein] + ATP = O-phospho-L-seryl-[protein] + ADP + H(+). It catalyses the reaction L-threonyl-[protein] + ATP = O-phospho-L-threonyl-[protein] + ADP + H(+). Serine/threonine-protein kinase that plays an essential role in the regulation of actin filament dynamics. Acts downstream of several Rho family GTPase signal transduction pathways. Activated by upstream kinases including ROCK1, PAK1 and PAK4, which phosphorylate LIMK1 on a threonine residue located in its activation loop. LIMK1 subsequently phosphorylates and inactivates the actin binding/depolymerizing factors cofilin-1/CFL1, cofilin-2/CFL2 and destrin/DSTN, thereby preventing the cleavage of filamentous actin (F-actin), and stabilizing the actin cytoskeleton. In this way LIMK1 regulates several actin-dependent biological processes including cell motility, cell cycle progression, and differentiation. Phosphorylates TPPP on serine residues, thereby promoting microtubule disassembly. Stimulates axonal outgrowth and may be involved in brain development. The chain is LIM domain kinase 1 (Limk1) from Mus musculus (Mouse).